The following is a 376-amino-acid chain: D-alanine--D-alanine ligase (376 aa).

Residues 150–358 (KIIFEKEGLP…YSELINKLIE (209 aa)) form the ATP-grasp domain. Position 183–238 (183–238 (EGRLTYPCFVKPSNAGSSVGVNKASDRESLVKALNIAAKNDRRILVEEFINGREIE)) interacts with ATP. D311, E325, and N327 together coordinate Mg(2+).

Belongs to the D-alanine--D-alanine ligase family. Mg(2+) is required as a cofactor. It depends on Mn(2+) as a cofactor.

It is found in the cytoplasm. The enzyme catalyses 2 D-alanine + ATP = D-alanyl-D-alanine + ADP + phosphate + H(+). The protein operates within cell wall biogenesis; peptidoglycan biosynthesis. Cell wall formation. The sequence is that of D-alanine--D-alanine ligase from Ruminiclostridium cellulolyticum (strain ATCC 35319 / DSM 5812 / JCM 6584 / H10) (Clostridium cellulolyticum).